Consider the following 561-residue polypeptide: ATP-dependent RNA helicase MRH4, mitochondrial (561 aa).

A mitochondrion-targeting transit peptide spans 1 to 26 (MSLFFKPVISPQWSFPVLLKIGVRSY). Residues 29–72 (GPRTKHKGNSPLASVPTGSSNKNRKQKAKGKKGNKKNDPDQAFN) are disordered. The span at 50–62 (KNRKQKAKGKKGN) shows a compositional bias: basic residues. Positions 98 to 129 (SNFDQLLILPPVRDAVKEIISKESLKLQDSRK) match the Q motif motif. Residues 131–319 (TSENIIPSPI…NINHLIFCSA (189 aa)) form the Helicase ATP-binding domain. Residue 144–151 (AIKRISKN) coordinates ATP. The DEAD box motif lies at 267 to 270 (SIRM). The 190-residue stretch at 350 to 539 (ALDFKVINSA…KQGGRVFMLT (190 aa)) folds into the Helicase C-terminal domain.

This sequence belongs to the DEAD box helicase family. MRH4 subfamily.

Its subcellular location is the mitochondrion. It catalyses the reaction ATP + H2O = ADP + phosphate + H(+). ATP-binding RNA helicase involved in mitochondrial RNA metabolism. Required for maintenance of mitochondrial DNA. This Saccharomyces cerevisiae (strain YJM789) (Baker's yeast) protein is ATP-dependent RNA helicase MRH4, mitochondrial (MRH4).